Reading from the N-terminus, the 914-residue chain is Effector protein hopAE1 (914 aa).

The segment covering 1–13 (MMPSQITRSSHSS) has biased composition (polar residues). Residues 1–31 (MMPSQITRSSHSSLPEVAPASGDAAGVSEQT) form a disordered region.

This sequence belongs to the HopW family.

Its subcellular location is the secreted. The sequence is that of Effector protein hopAE1 (hopAE1) from Pseudomonas syringae pv. syringae (strain B728a).